A 158-amino-acid chain; its full sequence is Succinate dehydrogenase assembly factor 2, mitochondrial (158 aa).

The N-terminal 17 residues, 1–17 (MFSANIARKVVCSVCRA), are a transit peptide targeting the mitochondrion.

Belongs to the SDHAF2 family. As to quaternary structure, interacts with sdha within the SDH catalytic dimer.

It localises to the mitochondrion matrix. Its function is as follows. Plays an essential role in the assembly of succinate dehydrogenase (SDH), an enzyme complex (also referred to as respiratory complex II) that is a component of both the tricarboxylic acid (TCA) cycle and the mitochondrial electron transport chain, and which couples the oxidation of succinate to fumarate with the reduction of ubiquinone (coenzyme Q) to ubiquinol. Required for flavinylation (covalent attachment of FAD) of the flavoprotein subunit sdha of the SDH catalytic dimer. The protein is Succinate dehydrogenase assembly factor 2, mitochondrial of Danio rerio (Zebrafish).